We begin with the raw amino-acid sequence, 329 residues long: 4-diphosphocytidyl-2-C-methyl-D-erythritol kinase (329 aa).

Lysine 14 is an active-site residue. An ATP-binding site is contributed by 117-127; that stretch reads PSGAGMGGASS. Residue aspartate 166 is part of the active site.

It belongs to the GHMP kinase family. IspE subfamily.

The enzyme catalyses 4-CDP-2-C-methyl-D-erythritol + ATP = 4-CDP-2-C-methyl-D-erythritol 2-phosphate + ADP + H(+). It participates in isoprenoid biosynthesis; isopentenyl diphosphate biosynthesis via DXP pathway; isopentenyl diphosphate from 1-deoxy-D-xylulose 5-phosphate: step 3/6. Its function is as follows. Catalyzes the phosphorylation of the position 2 hydroxy group of 4-diphosphocytidyl-2C-methyl-D-erythritol. This chain is 4-diphosphocytidyl-2-C-methyl-D-erythritol kinase, found in Rhodopirellula baltica (strain DSM 10527 / NCIMB 13988 / SH1).